The sequence spans 400 residues: Homoserine O-acetyltransferase (400 aa).

A disordered region spans residues 1–22 (MMNVHPVKGPVATGGERPHEAD). The 311-residue stretch at 64–374 (NAILVCHALT…DKGHDAFLLD (311 aa)) folds into the AB hydrolase-1 domain. Ser-169 serves as the catalytic Nucleophile. Residue Arg-239 coordinates substrate. Residues Asp-335 and His-368 contribute to the active site. Substrate is bound at residue Asp-369.

It belongs to the AB hydrolase superfamily. MetX family. In terms of assembly, homodimer.

It is found in the cytoplasm. The enzyme catalyses L-homoserine + acetyl-CoA = O-acetyl-L-homoserine + CoA. It functions in the pathway amino-acid biosynthesis; L-methionine biosynthesis via de novo pathway; O-acetyl-L-homoserine from L-homoserine: step 1/1. Its function is as follows. Transfers an acetyl group from acetyl-CoA to L-homoserine, forming acetyl-L-homoserine. In Rhodopseudomonas palustris (strain HaA2), this protein is Homoserine O-acetyltransferase.